The primary structure comprises 197 residues: Pinin homolog 1 (197 aa).

Positions 30–73 are disordered; the sequence is LDGKVNNEDSHMEIDQPEGSMEEDDHRQVKEKNTSENSVEQKRG. 2 stretches are compositionally biased toward basic and acidic residues: residues 34–43 and 53–71; these read VNNEDSHMEI and DDHRQVKEKNTSENSVEQK.

It belongs to the pinin family.

The protein resides in the nucleus. It is found in the cytoplasm. In terms of biological role, transcriptional activator that may participate in the regulation of mRNA splicing. This is Pinin homolog 1 (pnn1) from Schizosaccharomyces pombe (strain 972 / ATCC 24843) (Fission yeast).